The chain runs to 152 residues: Ninjurin-1 (152 aa).

Residue methionine 1 is modified to N-acetylmethionine. Residues 1-26 (MDSGTEEYELNGGLPPGTPGSPDASP) form a disordered region. Residues 1–78 (MDSGTEEYEL…EQGPSFAFYV (78 aa)) lie on the Extracellular side of the membrane. Residues serine 21 and serine 25 each carry the phosphoserine modification. The tract at residues 26 to 37 (PARWGWRHGPIN) is N-terminal adhesion motif. A required to induce plasma membrane rupture region spans residues 40 to 69 (HYASKKSAAESMLDIALLMANASQLKAVVE). The helix alpha1 stretch occupies residues 44–55 (KKSAAESMLDIA). The tract at residues 58–74 (MANASQLKAVVEQGPSF) is helix alpha2. The N-linked (GlcNAc...) asparagine glycan is linked to asparagine 60. The helical transmembrane segment at 79–103 (PLVVLISISLVLQIGVGVLLIFLVK) threads the bilayer. Over 104-113 (YDLNNPAKHA) the chain is Cytoplasmic. A helical membrane pass occupies residues 114-138 (KLDFLNNLATGLVFIIVVVNIFITA). At 139 to 152 (FGVQKPLMDMAPQQ) the chain is on the extracellular side.

This sequence belongs to the ninjurin family. As to quaternary structure, homodimer; in absence of death stimuli, forms an inactive homodimer. Homooligomer; in response to death stimuli, homooligomerizes into long, highly branched filaments and large, ring-shaped structures in the membrane. In terms of processing, cleaved by MMP9 protease to generate the Secreted ninjurin-1 form. Post-translationally, N-linked glycosylation is required for homooligomerization. As to expression, widely expressed in both adult and embryonic tissues, primarily those of epithelial origin.

Its subcellular location is the cell membrane. The protein localises to the synaptic cell membrane. The protein resides in the secreted. With respect to regulation, in response to death stimuli, homooligomerizes and disrupts membrane integrity by introducing the hydrophilic faces of alpha1 and alpha2 helices into the hydrophobic membrane. Homooligomerization and ability to mediate plasma membrane rupture is inhibited by glycine; it is unclear whether glycine directly or indirectly inhibits homooligomerization. In normal conditions, NINJ1 is autoinhibited via formation of a homodimer: in the inactive homodimer, the alpha1 and alpha2 helices (residues 44-74) form a single transmembrane region without a kink, in which hydrophilic faces of alpha1 and alpha2 helices are sequestered. Its function is as follows. Effector of various programmed cell death, such as pyroptosis and necroptosis, which mediates plasma membrane rupture (cytolysis). Oligomerizes in response to death stimuli and forms ring-like structures on the plasma membrane: acts by cutting and shedding membrane disks, like a cookie cutter, leading to membrane damage and loss that cannot be repaired by the cell. Plasma membrane rupture leads to release intracellular molecules named damage-associated molecular patterns (DAMPs) that propagate the inflammatory response. Mechanistically, mediates plasma membrane rupture by introducing hydrophilic faces of 2 alpha helices into the hydrophobic membrane. Induces plasma membrane rupture downstream of Gasdermin (GSDMA, GSDMB, GSDMC, GSDMD, or GSDME) or MLKL during pyroptosis or necroptosis, respectively. Acts as an effector of PANoptosis downstream of CASP1, CASP4, CASP8 and RIPK3. Also induces plasma membrane rupture in response to cell swelling caused by osmotic stress and ferroptosis downstream of lipid peroxidation. Acts as a regulator of Toll-like receptor 4 (TLR4) signaling triggered by lipopolysaccharide (LPS) during systemic inflammation; directly binds LPS. Involved in leukocyte migration during inflammation by promoting transendothelial migration of macrophages via homotypic binding. Promotes the migration of monocytes across the brain endothelium to central nervous system inflammatory lesions. Also acts as a homophilic transmembrane adhesion molecule involved in various processes such as axonal growth, cell chemotaxis and angiogenesis. Promotes cell adhesion by mediating homophilic interactions via its extracellular N-terminal adhesion motif (N-NAM). Involved in the progression of the inflammatory stress by promoting cell-to-cell interactions between immune cells and endothelial cells. Plays a role in nerve regeneration by promoting maturation of Schwann cells. Acts as a regulator of angiogenesis. Promotes the formation of new vessels by mediating the interaction between capillary pericyte cells and endothelial cells. Promotes osteoclasts development by enhancing the survival of prefusion osteoclasts. Also involved in striated muscle growth and differentiation. Secreted form generated by cleavage, which has chemotactic activity. Acts as an anti-inflammatory mediator by promoting monocyte recruitment, thereby ameliorating atherosclerosis. The chain is Ninjurin-1 from Homo sapiens (Human).